Reading from the N-terminus, the 140-residue chain is Large ribosomal subunit protein uL11 (140 aa).

The protein belongs to the universal ribosomal protein uL11 family. As to quaternary structure, part of the ribosomal stalk of the 50S ribosomal subunit. Interacts with L10 and the large rRNA to form the base of the stalk. L10 forms an elongated spine to which L12 dimers bind in a sequential fashion forming a multimeric L10(L12)X complex. Post-translationally, one or more lysine residues are methylated.

In terms of biological role, forms part of the ribosomal stalk which helps the ribosome interact with GTP-bound translation factors. The chain is Large ribosomal subunit protein uL11 from Geobacter sp. (strain M21).